The chain runs to 98 residues: Integration host factor subunit alpha (98 aa).

A disordered region spans residues 51–71 (NFDLRDKNERPGRNPKTGEDI). Over residues 53–69 (DLRDKNERPGRNPKTGE) the composition is skewed to basic and acidic residues.

Belongs to the bacterial histone-like protein family. As to quaternary structure, heterodimer of an alpha and a beta chain.

This protein is one of the two subunits of integration host factor, a specific DNA-binding protein that functions in genetic recombination as well as in transcriptional and translational control. This Vibrio campbellii (strain ATCC BAA-1116) protein is Integration host factor subunit alpha.